Reading from the N-terminus, the 353-residue chain is 6-phosphogluconolactonase (353 aa).

It belongs to the cycloisomerase 2 family.

The protein resides in the cytoplasm. The catalysed reaction is 6-phospho-D-glucono-1,5-lactone + H2O = 6-phospho-D-gluconate + H(+). The protein operates within carbohydrate degradation; pentose phosphate pathway; D-ribulose 5-phosphate from D-glucose 6-phosphate (oxidative stage): step 2/3. Its function is as follows. Carboxylic ester hydrolase that may be involved in ulvan degradation. Ulvan is the main polysaccharide component of the Ulvales (green seaweed) cell wall. It is composed of disaccharide building blocks comprising 3-sulfated rhamnose (Rha3S) linked to D-glucuronic acid (GlcA), L-iduronic acid (IduA), or D-xylose (Xyl). Catalyzes the hydrolysis of 6-phosphogluconolactone to 6-phosphogluconate. In Formosa agariphila (strain DSM 15362 / KCTC 12365 / LMG 23005 / KMM 3901 / M-2Alg 35-1), this protein is 6-phosphogluconolactonase (pgl).